Here is a 355-residue protein sequence, read N- to C-terminus: uncharacterized protein (355 aa).

Residues 6-26 (LLTPYFLLSILSVGVFTATAA) traverse the membrane as a helical segment.

It belongs to the SUN family.

It is found in the membrane. This is an uncharacterized protein from Saccharomyces cerevisiae (strain ATCC 204508 / S288c) (Baker's yeast).